A 128-amino-acid chain; its full sequence is Flagellar assembly factor FliW 1 (128 aa).

It belongs to the FliW family. As to quaternary structure, interacts with translational regulator CsrA and flagellin(s).

It is found in the cytoplasm. Acts as an anti-CsrA protein, binds CsrA and prevents it from repressing translation of its target genes, one of which is flagellin. Binds to flagellin and participates in the assembly of the flagellum. This is Flagellar assembly factor FliW 1 from Wolinella succinogenes (strain ATCC 29543 / DSM 1740 / CCUG 13145 / JCM 31913 / LMG 7466 / NCTC 11488 / FDC 602W) (Vibrio succinogenes).